We begin with the raw amino-acid sequence, 139 residues long: Nucleoside diphosphate kinase (139 aa).

ATP-binding residues include Lys10, Phe58, Arg86, Thr92, Arg104, and Asn114. His117 serves as the catalytic Pros-phosphohistidine intermediate.

It belongs to the NDK family. As to quaternary structure, homotetramer. Requires Mg(2+) as cofactor.

It localises to the cytoplasm. It carries out the reaction a 2'-deoxyribonucleoside 5'-diphosphate + ATP = a 2'-deoxyribonucleoside 5'-triphosphate + ADP. It catalyses the reaction a ribonucleoside 5'-diphosphate + ATP = a ribonucleoside 5'-triphosphate + ADP. Its function is as follows. Major role in the synthesis of nucleoside triphosphates other than ATP. The ATP gamma phosphate is transferred to the NDP beta phosphate via a ping-pong mechanism, using a phosphorylated active-site intermediate. In Nocardia farcinica (strain IFM 10152), this protein is Nucleoside diphosphate kinase.